The sequence spans 1080 residues: Putative bifunctional amine oxidase DDB_G0291301 (1080 aa).

Positions 1 to 450 are putative sarcosine oxidase; sequence MREFLKDDYD…TIAKSTVPTN (450 aa). 10–40 is a binding site for FAD; it reads DVIVCGGGPVGLATAYRCAKAGKKVLCLEKS. The segment at 445-464 is disordered; the sequence is STVPTNQSSNPDGASSTAPT. A putative L-amino-acid oxidase region spans residues 450-1080; sequence NQSSNPDGAS…NTAASIGGLK (631 aa). Residues 508–528 traverse the membrane as a helical segment; the sequence is VGIIGAGMAGLYAAMILQDLG. Residues E535, R544, and 563 to 564 each bind FAD; that span reads GA. Y886 is a substrate binding site. Residues E978 and 987 to 990 contribute to the FAD site; that span reads VIGS.

This sequence in the N-terminal section; belongs to the MSOX/MTOX family. The protein in the C-terminal section; belongs to the flavin monoamine oxidase family. It depends on FAD as a cofactor.

The protein resides in the membrane. The enzyme catalyses sarcosine + O2 + H2O = formaldehyde + glycine + H2O2. It carries out the reaction L-pipecolate + O2 = L-1-piperideine-6-carboxylate + H2O2 + H(+). It catalyses the reaction an L-alpha-amino acid + O2 + H2O = a 2-oxocarboxylate + H2O2 + NH4(+). Catalyzes an oxidative deamination of predominantly hydrophobic and aromatic L-amino acids. Metabolizes sarcosine, L-pipecolic acid and L-proline. The chain is Putative bifunctional amine oxidase DDB_G0291301 from Dictyostelium discoideum (Social amoeba).